Reading from the N-terminus, the 396-residue chain is Tryptophan synthase beta chain (396 aa).

The residue at position 96 (lysine 96) is an N6-(pyridoxal phosphate)lysine.

This sequence belongs to the TrpB family. In terms of assembly, tetramer of two alpha and two beta chains. It depends on pyridoxal 5'-phosphate as a cofactor.

It carries out the reaction (1S,2R)-1-C-(indol-3-yl)glycerol 3-phosphate + L-serine = D-glyceraldehyde 3-phosphate + L-tryptophan + H2O. The protein operates within amino-acid biosynthesis; L-tryptophan biosynthesis; L-tryptophan from chorismate: step 5/5. Its function is as follows. The beta subunit is responsible for the synthesis of L-tryptophan from indole and L-serine. The sequence is that of Tryptophan synthase beta chain from Azobacteroides pseudotrichonymphae genomovar. CFP2.